A 316-amino-acid chain; its full sequence is uncharacterized protein (316 aa).

Residues 12–34 traverse the membrane as a helical segment; that stretch reads RWVCLTSVILFCFCIAVMRYGGV.

Its subcellular location is the membrane. This is an uncharacterized protein from Treponema pallidum (strain Nichols).